A 205-amino-acid chain; its full sequence is uncharacterized protein (205 aa).

Positions 51-189 constitute a Nudix hydrolase domain; that stretch reads ANVDAVAILA…KKGFAIDVRL (139 aa). Positions 90-111 match the Nudix box motif; the sequence is GLVDSKESCEDAAIRELREETG.

Belongs to the Nudix hydrolase family.

It is found in the cytoplasm. Its subcellular location is the nucleus. This is an uncharacterized protein from Schizosaccharomyces pombe (strain 972 / ATCC 24843) (Fission yeast).